The primary structure comprises 33 residues: Cytochrome b6-f complex subunit 8 (33 aa).

A helical membrane pass occupies residues 2-22 (IFQIGWAALAAIFTFSIAMVV).

This sequence belongs to the PetN family. In terms of assembly, the 4 large subunits of the cytochrome b6-f complex are cytochrome b6, subunit IV (17 kDa polypeptide, PetD), cytochrome f and the Rieske protein, while the 4 small subunits are PetG, PetL, PetM and PetN. The complex functions as a dimer.

It is found in the cellular thylakoid membrane. Its function is as follows. Component of the cytochrome b6-f complex, which mediates electron transfer between photosystem II (PSII) and photosystem I (PSI), cyclic electron flow around PSI, and state transitions. This Prochlorococcus marinus (strain MIT 9301) protein is Cytochrome b6-f complex subunit 8.